Here is a 582-residue protein sequence, read N- to C-terminus: MITRMSELFLRTLRDDPADAEVASHKLLIRAGYIRPVAPGLYSWLPLGLRVLRNIERVIRDEMNAIGGQEILFPALLPRAPYETTNRWTQYGDSVFRLKDRRGNDYLLGPTHEELFTLTVKGEYSSYKDFPLTLYQIQTKYRDEARPRAGILRAREFVMKDSYSFDIDAAGLKAAYHAHREAYQRIFDRLQVRYVIVSAVSGAMGGSASEEFLAESPSGEDAFVRCLESGYAANVEAVVTARPDTLPIDGLPEAVVHDTGDTPTIASLVAWANEADLGRTVTAADTLKNVLIKVRQPGGDTELLAIGVPGDREVDDKRLGAALEPADYALLDDDDFAKHPFLVKGYIGPKALRENNVRYLVDPRIVDGTSWITGADQPGRHVVGLVAGRDFTADGTIEAAEVREGDPSPDGAGPLVMARGIEIGHIFQLGSKYTDAFTADVLGEDGKPVRLTMGSYGIGVSRLVAVVAEQHHDELGLRWPSTVAPFDVHLVIANKDAQARAGATALAADLDRLGVEVLLDDRQASPGVKFKDAELLGMPWIVVVGRGWADGVVELRDRFSGQTRELVAGASLATDIAAAVTG.

The protein belongs to the class-II aminoacyl-tRNA synthetase family. ProS type 1 subfamily. In terms of assembly, homodimer.

The protein localises to the cytoplasm. The catalysed reaction is tRNA(Pro) + L-proline + ATP = L-prolyl-tRNA(Pro) + AMP + diphosphate. Functionally, catalyzes the attachment of proline to tRNA(Pro) in a two-step reaction: proline is first activated by ATP to form Pro-AMP and then transferred to the acceptor end of tRNA(Pro). As ProRS can inadvertently accommodate and process non-cognate amino acids such as alanine and cysteine, to avoid such errors it has two additional distinct editing activities against alanine. One activity is designated as 'pretransfer' editing and involves the tRNA(Pro)-independent hydrolysis of activated Ala-AMP. The other activity is designated 'posttransfer' editing and involves deacylation of mischarged Ala-tRNA(Pro). The misacylated Cys-tRNA(Pro) is not edited by ProRS. In Mycobacterium tuberculosis (strain CDC 1551 / Oshkosh), this protein is Proline--tRNA ligase.